The primary structure comprises 65 residues: Large ribosomal subunit protein bL35 (65 aa).

Residues 1–10 show a composition bias toward basic residues; sequence MPKMKSKSSA. A disordered region spans residues 1–21; it reads MPKMKSKSSAKMRFSVRAGGT.

This sequence belongs to the bacterial ribosomal protein bL35 family.

This chain is Large ribosomal subunit protein bL35, found in Polynucleobacter necessarius subsp. necessarius (strain STIR1).